The following is a 283-amino-acid chain: Foldase protein PrsA 3 (283 aa).

A signal peptide spans 1–21 (MKKKKIFIGTIISCVMLALSA). C22 carries the N-palmitoyl cysteine lipid modification. C22 carries the S-diacylglycerol cysteine lipid modification. In terms of domain architecture, PpiC spans 132–222 (KPEMKVSHIL…YGYHIIKVTD (91 aa)).

Belongs to the PrsA family.

The protein localises to the cell membrane. The catalysed reaction is [protein]-peptidylproline (omega=180) = [protein]-peptidylproline (omega=0). Plays a major role in protein secretion by helping the post-translocational extracellular folding of several secreted proteins. The protein is Foldase protein PrsA 3 (prsA3) of Bacillus cereus (strain ATCC 14579 / DSM 31 / CCUG 7414 / JCM 2152 / NBRC 15305 / NCIMB 9373 / NCTC 2599 / NRRL B-3711).